Here is a 465-residue protein sequence, read N- to C-terminus: MMKVVSPRTRSDSITEKVFRRVYSNFNISTVEDEYIHRQRSSDYEKESRLRKRGLEDKEEVMEMEQMGAERIKTVLILMSDTGGGHRASAEAIRDAFKIEFGDDYRIIIKDVWKEYTGWPLNDMERQYKFMVKHVGLWSVAFHGTSPKWIHKSYLSALAAYYAKEIEAGLMEYKPDIIISVHPLMQHIPLWVMKWQGLHKKVIFVTVITDLNTCHRTWFHHGVSRCYCPSKEVAKRALVDGLDDSQIRVFGLPVRPSFPRTILNKNELRKELEIDLNLPAVLLMGGGEGMGPVQKTALALGDSLYNSKESNPIGQLIVICGRNKVLASTLASHEWKIPVKVRGFETQMEKWMGACDCIITKAGPGTIAEALICGLPIILNDYIPGQEKGNVPYVVDNGAGVFTRSPKETAKIVADWFSNNKEELKKMSENALKLSQPEAVFDIVKDIHHLSQQQQRIPLFNEFSY.

Residues H86, R255, 365–369 (GTIAE), and E387 contribute to the UDP site.

The protein belongs to the glycosyltransferase 28 family. Expressed mainly in roots. Detected in flowers, leaves, stems, siliques and pollen tubes.

Its subcellular location is the plastid. The protein resides in the chloroplast outer membrane. The enzyme catalyses a 1,2-diacyl-sn-glycerol + UDP-alpha-D-galactose = a 1,2-diacyl-3-O-(beta-D-galactosyl)-sn-glycerol + UDP + H(+). It carries out the reaction 1,2-di-(9Z,12Z-octadecadienoyl)-sn-glycerol + UDP-alpha-D-galactose = 1,2-di-(9Z,12Z-octadecadienoyl)-3-beta-D-galactosyl-sn-glycerol + UDP + H(+). The catalysed reaction is 1-(9Z-octadecenoyl)-2-hexadecanoyl-sn-glycerol + UDP-alpha-D-galactose = 1-(9Z-octadecenoyl)-2-hexadecanoyl-3-beta-D-galactosyl-sn-glycerol + UDP + H(+). It catalyses the reaction 1,2-di-(9Z-octadecenoyl)-sn-glycerol + UDP-alpha-D-galactose = 1,2-di-(9Z-octadecenoyl)-3-beta-D-galactosyl-sn-glycerol + UDP + H(+). Its activity is regulated as follows. Inhibited by galvestine-1. Involved in the synthesis of monogalactosyldiacylglycerol, the major structural component of photosynthetic membranes and in the chloroplast envelope biogenesis. Can use both prokaryotic (18:1/16:0) or eukaryotic (18:2/18:2) 1,2-diacylglycerol species, but operates with some preference for the eukaryotic one. Plays a minor role in galactolipid synthesis in chloroplasts. Is essential for membrane lipid remodeling in phosphate-starved roots. Acts as the major factor involved in digalactosyldiacylglycerol (DGDG) biosynthesis in phosphate-starved roots. Does not seem to be required for plant growth under nutrient-sufficient conditions. Required for membrane lipid remodeling in plants grown in acidic conditions. The protein is Monogalactosyldiacylglycerol synthase 3, chloroplastic of Arabidopsis thaliana (Mouse-ear cress).